The chain runs to 224 residues: Thymidine kinase (224 aa).

ATP is bound by residues 19–26 (GPMFAGKT) and 93–96 (DEVQ). Glutamate 94 functions as the Proton acceptor in the catalytic mechanism. 4 residues coordinate Zn(2+): cysteine 150, cysteine 153, cysteine 188, and histidine 191.

The protein belongs to the thymidine kinase family. Homotetramer.

The protein resides in the cytoplasm. The catalysed reaction is thymidine + ATP = dTMP + ADP + H(+). The protein is Thymidine kinase of Mycoplasmoides gallisepticum (strain R(low / passage 15 / clone 2)) (Mycoplasma gallisepticum).